Consider the following 300-residue polypeptide: tRNA pseudouridine synthase B (300 aa).

The active-site Nucleophile is the aspartate 38.

It belongs to the pseudouridine synthase TruB family. Type 1 subfamily.

It carries out the reaction uridine(55) in tRNA = pseudouridine(55) in tRNA. Functionally, responsible for synthesis of pseudouridine from uracil-55 in the psi GC loop of transfer RNAs. The protein is tRNA pseudouridine synthase B of Dehalococcoides mccartyi (strain ATCC BAA-2266 / KCTC 15142 / 195) (Dehalococcoides ethenogenes (strain 195)).